We begin with the raw amino-acid sequence, 239 residues long: Probable transcriptional regulatory protein Aave_3203 (239 aa).

The tract at residues M1–K20 is disordered.

Belongs to the TACO1 family.

Its subcellular location is the cytoplasm. This Paracidovorax citrulli (strain AAC00-1) (Acidovorax citrulli) protein is Probable transcriptional regulatory protein Aave_3203.